A 599-amino-acid polypeptide reads, in one-letter code: Elongation factor 4 (599 aa).

Positions 2–184 constitute a tr-type G domain; sequence KNIRNFSIIA…RLVRDIPPPE (183 aa). GTP-binding positions include 14–19 and 131–134; these read DHGKST and NKID.

The protein belongs to the TRAFAC class translation factor GTPase superfamily. Classic translation factor GTPase family. LepA subfamily.

The protein localises to the cell inner membrane. It carries out the reaction GTP + H2O = GDP + phosphate + H(+). Functionally, required for accurate and efficient protein synthesis under certain stress conditions. May act as a fidelity factor of the translation reaction, by catalyzing a one-codon backward translocation of tRNAs on improperly translocated ribosomes. Back-translocation proceeds from a post-translocation (POST) complex to a pre-translocation (PRE) complex, thus giving elongation factor G a second chance to translocate the tRNAs correctly. Binds to ribosomes in a GTP-dependent manner. This is Elongation factor 4 from Shigella sonnei (strain Ss046).